Reading from the N-terminus, the 210-residue chain is Somatotropin-2 (210 aa).

Positions 1-22 (MGQVFLLMPVLLVSCFLGQGAA) are cleaved as a signal peptide. A Zn(2+)-binding site is contributed by histidine 38. Cysteine 71 and cysteine 183 are oxidised to a cystine. Zn(2+) is bound at residue glutamate 192. A disulfide bond links cysteine 200 and cysteine 208.

The protein belongs to the somatotropin/prolactin family.

It is found in the secreted. In terms of biological role, growth hormone plays an important role in growth control and is involved in the regulation of several anabolic processes. Implicated as an osmoregulatory substance important for seawater adaptation. This is Somatotropin-2 (gh2) from Oncorhynchus mykiss (Rainbow trout).